A 311-amino-acid polypeptide reads, in one-letter code: tRNA dimethylallyltransferase (311 aa).

ATP is bound at residue 16 to 23 (GATASGKS). 18–23 (TASGKS) serves as a coordination point for substrate. Interaction with substrate tRNA stretches follow at residues 41–44 (DSRQ) and 165–169 (QRLIR).

Belongs to the IPP transferase family. In terms of assembly, monomer. Requires Mg(2+) as cofactor.

It catalyses the reaction adenosine(37) in tRNA + dimethylallyl diphosphate = N(6)-dimethylallyladenosine(37) in tRNA + diphosphate. In terms of biological role, catalyzes the transfer of a dimethylallyl group onto the adenine at position 37 in tRNAs that read codons beginning with uridine, leading to the formation of N6-(dimethylallyl)adenosine (i(6)A). The chain is tRNA dimethylallyltransferase from Chlorobium chlorochromatii (strain CaD3).